We begin with the raw amino-acid sequence, 309 residues long: Homoserine O-succinyltransferase (309 aa).

Cysteine 142 functions as the Acyl-thioester intermediate in the catalytic mechanism. Residues lysine 163 and serine 192 each contribute to the substrate site. Histidine 235 (proton acceptor) is an active-site residue. The active site involves glutamate 237. Arginine 249 is a binding site for substrate.

The protein belongs to the MetA family.

The protein resides in the cytoplasm. It carries out the reaction L-homoserine + succinyl-CoA = O-succinyl-L-homoserine + CoA. Its pathway is amino-acid biosynthesis; L-methionine biosynthesis via de novo pathway; O-succinyl-L-homoserine from L-homoserine: step 1/1. Transfers a succinyl group from succinyl-CoA to L-homoserine, forming succinyl-L-homoserine. The chain is Homoserine O-succinyltransferase from Enterobacter sp. (strain 638).